A 1246-amino-acid polypeptide reads, in one-letter code: Zinc finger protein 687a (1246 aa).

Positions 24-47 (KEAIQSDTHGNHNEHSSVVGKERS) are enriched in basic and acidic residues. The interval 24–387 (KEAIQSDTHG…PTLVESASDA (364 aa)) is disordered. 2 stretches are compositionally biased toward polar residues: residues 88-111 (GEFS…SSVP) and 163-195 (AFTN…FSSK). The span at 287–301 (SSTNPTSLTSTNNLP) shows a compositional bias: low complexity. Residues 302–317 (VEEKDLEHIIEERDSP) are compositionally biased toward basic and acidic residues. A compositionally biased stretch (polar residues) spans 326 to 338 (QSRTSLPSNSQGA). 2 stretches are compositionally biased toward basic and acidic residues: residues 341-350 (SKQRITREEA) and 360-375 (MQEK…EGKS). Residues 587-619 (YRCLECGDAFALERSLARHYDRRSMRIEVTCNH) form a C2H2-type 1 zinc finger. Residues 696 to 719 (HSCPECWSTFKGKQELVAHFQEVE) form a C2H2-type 2; degenerate zinc finger. 3 consecutive C2H2-type zinc fingers follow at residues 817-840 (HKCP…ASQH), 854-876 (YKCV…IDTH), and 885-908 (FKCP…KDTH). Residues 907 to 953 (THRETSNHDGTSTQNSLVKMESSDGEEWGRDEEEDKGKVSDANSAVP) are disordered. The segment covering 914 to 923 (HDGTSTQNSL) has biased composition (polar residues). The segment covering 929–940 (SDGEEWGRDEEE) has biased composition (acidic residues). 2 consecutive C2H2-type zinc fingers follow at residues 958–981 (WSCS…TEQH) and 988–1011 (FPCT…RVKH). The C2H2-type 8; degenerate zinc finger occupies 1018–1044 (FYCQLCTGEKRSFSSKLILEKHIQAQH). A disordered region spans residues 1045–1093 (AGERGTATQSQAVPQFTDGADSSSEHDAGVLGGSSVEPESRLAESTLTR). C2H2-type zinc fingers lie at residues 1137–1160 (AQCQ…FISH) and 1210–1232 (HICK…FRTH).

This sequence belongs to the krueppel C2H2-type zinc-finger protein family. As to expression, widely expressed with highest levels in kidney, spleen and ovary.

The protein resides in the nucleus. Functionally, may be involved in transcriptional regulation. In Danio rerio (Zebrafish), this protein is Zinc finger protein 687a (znf687a).